Consider the following 343-residue polypeptide: Endoglucanase C (343 aa).

Catalysis depends on glutamate 140, which acts as the Proton donor. The active-site Nucleophile is glutamate 280.

It belongs to the glycosyl hydrolase 5 (cellulase A) family.

The enzyme catalyses Endohydrolysis of (1-&gt;4)-beta-D-glucosidic linkages in cellulose, lichenin and cereal beta-D-glucans.. It participates in glycan metabolism; cellulose degradation. This enzyme catalyzes the endohydrolysis of 1,4-beta-glucosidic linkages in cellulose, lichenin and cereal beta-D-glucans. In Acetivibrio thermocellus (strain ATCC 27405 / DSM 1237 / JCM 9322 / NBRC 103400 / NCIMB 10682 / NRRL B-4536 / VPI 7372) (Clostridium thermocellum), this protein is Endoglucanase C (celC).